The sequence spans 251 residues: 2,3-bisphosphoglycerate-dependent phosphoglycerate mutase (251 aa).

Residues 11–18 (RHGESDWN), 24–25 (TG), Arg-63, 90–93 (ERHY), Lys-101, 117–118 (RR), and 184–185 (GN) each bind substrate. Residue His-12 is the Tele-phosphohistidine intermediate of the active site. Residue Glu-90 is the Proton donor/acceptor of the active site.

The protein belongs to the phosphoglycerate mutase family. BPG-dependent PGAM subfamily.

The enzyme catalyses (2R)-2-phosphoglycerate = (2R)-3-phosphoglycerate. It participates in carbohydrate degradation; glycolysis; pyruvate from D-glyceraldehyde 3-phosphate: step 3/5. In terms of biological role, catalyzes the interconversion of 2-phosphoglycerate and 3-phosphoglycerate. The polypeptide is 2,3-bisphosphoglycerate-dependent phosphoglycerate mutase (Mycobacterium marinum (strain ATCC BAA-535 / M)).